A 188-amino-acid polypeptide reads, in one-letter code: GTP cyclohydrolase 1 (188 aa).

Residues Cys75, His78, and Cys146 each coordinate Zn(2+).

Belongs to the GTP cyclohydrolase I family. As to quaternary structure, toroid-shaped homodecamer, composed of two pentamers of five dimers.

The enzyme catalyses GTP + H2O = 7,8-dihydroneopterin 3'-triphosphate + formate + H(+). It participates in cofactor biosynthesis; 7,8-dihydroneopterin triphosphate biosynthesis; 7,8-dihydroneopterin triphosphate from GTP: step 1/1. This chain is GTP cyclohydrolase 1, found in Hahella chejuensis (strain KCTC 2396).